We begin with the raw amino-acid sequence, 216 residues long: Octanoyltransferase (216 aa).

In terms of domain architecture, BPL/LPL catalytic spans serine 31–glutamine 205. Substrate-binding positions include arginine 70–histidine 77, serine 137–glycine 139, and glycine 150–alanine 152. Cysteine 168 functions as the Acyl-thioester intermediate in the catalytic mechanism.

Belongs to the LipB family.

It localises to the cytoplasm. It carries out the reaction octanoyl-[ACP] + L-lysyl-[protein] = N(6)-octanoyl-L-lysyl-[protein] + holo-[ACP] + H(+). The protein operates within protein modification; protein lipoylation via endogenous pathway; protein N(6)-(lipoyl)lysine from octanoyl-[acyl-carrier-protein]: step 1/2. Its function is as follows. Catalyzes the transfer of endogenously produced octanoic acid from octanoyl-acyl-carrier-protein onto the lipoyl domains of lipoate-dependent enzymes. Lipoyl-ACP can also act as a substrate although octanoyl-ACP is likely to be the physiological substrate. In Vibrio cholerae serotype O1 (strain ATCC 39541 / Classical Ogawa 395 / O395), this protein is Octanoyltransferase.